A 248-amino-acid chain; its full sequence is Murein peptide amidase A (248 aa).

One can recognise a Peptidase M14 domain in the interval 3–245 (RYYSNNQEIT…DAFIALLQHD (243 aa)). Residues histidine 60, glutamate 63, and histidine 168 each contribute to the Zn(2+) site. Glutamate 221 functions as the Proton donor/acceptor in the catalytic mechanism.

It belongs to the peptidase M14 family. As to quaternary structure, homodimer. Zn(2+) is required as a cofactor.

It is found in the cytoplasm. It carries out the reaction L-alanyl-gamma-D-glutamyl-meso-2,6-diaminopimelate + H2O = L-alanyl-D-glutamate + meso-2,6-diaminopimelate. It participates in cell wall degradation; peptidoglycan degradation. Functionally, involved in muropeptide degradation. Catalyzes the hydrolysis of the gamma-D-glutamyl-diaminopimelic acid (gamma-D-Glu-Dap) amide bond in the murein tripeptide L-alanyl-gamma-D-glutamyl-meso-diaminopimelic acid, leading to the formation of L-Ala-gamma-D-Glu and Dap. Has weak activity with L-Ala-gamma-D-Glu-L-Lys, MurNAc-tripeptide and gamma-D-Glu-meso-Dap. Cannot hydrolyze murein tetrapeptide. The chain is Murein peptide amidase A from Vibrio campbellii (strain ATCC BAA-1116).